An 892-amino-acid chain; its full sequence is Translation initiation factor IF-2 (892 aa).

The segment covering Gln-138–Val-185 has biased composition (basic and acidic residues). Disordered regions lie at residues Gln-138–Ser-250 and Ala-262–His-298. A compositionally biased stretch (low complexity) spans Leu-207 to Pro-219. Residues Pro-391–Lys-560 form the tr-type G domain. GTP contacts are provided by residues Gly-400–Thr-407, Asp-446–His-450, and Ser-500–Asp-503.

The protein belongs to the TRAFAC class translation factor GTPase superfamily. Classic translation factor GTPase family. IF-2 subfamily.

The protein localises to the cytoplasm. Functionally, one of the essential components for the initiation of protein synthesis. Protects formylmethionyl-tRNA from spontaneous hydrolysis and promotes its binding to the 30S ribosomal subunits. Also involved in the hydrolysis of GTP during the formation of the 70S ribosomal complex. This Xylella fastidiosa (strain Temecula1 / ATCC 700964) protein is Translation initiation factor IF-2.